Here is a 303-residue protein sequence, read N- to C-terminus: Putative band 7 family protein R614 (303 aa).

This sequence belongs to the band 7/mec-2 family.

This Acanthamoeba polyphaga (Amoeba) protein is Putative band 7 family protein R614.